The primary structure comprises 397 residues: Elongation factor Tu-1 (397 aa).

Residues 10–206 (KPHVNIGTIG…AVDEAIPEPE (197 aa)) enclose the tr-type G domain. Residues 19–26 (GHIDHGKT) form a G1 region. 19 to 26 (GHIDHGKT) contacts GTP. T26 is a Mg(2+) binding site. Residues 62–66 (GITIS) are G2. The tract at residues 83–86 (DCPG) is G3. GTP-binding positions include 83–87 (DCPGH) and 138–141 (NKAD). The interval 138 to 141 (NKAD) is G4. A G5 region spans residues 176 to 178 (SAL).

It belongs to the TRAFAC class translation factor GTPase superfamily. Classic translation factor GTPase family. EF-Tu/EF-1A subfamily. In terms of assembly, monomer.

The protein localises to the cytoplasm. It catalyses the reaction GTP + H2O = GDP + phosphate + H(+). Its function is as follows. GTP hydrolase that promotes the GTP-dependent binding of aminoacyl-tRNA to the A-site of ribosomes during protein biosynthesis. The polypeptide is Elongation factor Tu-1 (Streptomyces coelicolor (strain ATCC BAA-471 / A3(2) / M145)).